A 416-amino-acid chain; its full sequence is Nuclear hormone receptor family member nhr-59 (416 aa).

Residues 17–94 (QTFCQVCGQE…IGMDIQNFQF (78 aa)) constitute a DNA-binding region (nuclear receptor). NR C4-type zinc fingers lie at residues 20 to 40 (CQVCGQESHGAHFGAITCRAC) and 57 to 82 (CKDGRGRCKILTNGRSCCKKCRLKKC). An NR LBD domain is found at 162 to 415 (TRLQKLSSSL…FSHPELVKDV (254 aa)).

It belongs to the nuclear hormone receptor family.

Its subcellular location is the nucleus. In terms of biological role, orphan nuclear receptor. This is Nuclear hormone receptor family member nhr-59 from Caenorhabditis elegans.